The chain runs to 228 residues: Large ribosomal subunit protein uL3 (228 aa).

The disordered stretch occupies residues Cys157–Gly176.

It belongs to the universal ribosomal protein uL3 family. As to quaternary structure, part of the 50S ribosomal subunit. Forms a cluster with proteins L14 and L19.

One of the primary rRNA binding proteins, it binds directly near the 3'-end of the 23S rRNA, where it nucleates assembly of the 50S subunit. In Rhodopirellula baltica (strain DSM 10527 / NCIMB 13988 / SH1), this protein is Large ribosomal subunit protein uL3.